The chain runs to 316 residues: Pantothenate kinase (316 aa).

ATP is bound at residue 95-102 (GSVAVGKS).

This sequence belongs to the prokaryotic pantothenate kinase family.

It localises to the cytoplasm. It catalyses the reaction (R)-pantothenate + ATP = (R)-4'-phosphopantothenate + ADP + H(+). It functions in the pathway cofactor biosynthesis; coenzyme A biosynthesis; CoA from (R)-pantothenate: step 1/5. The chain is Pantothenate kinase from Hamiltonella defensa subsp. Acyrthosiphon pisum (strain 5AT).